The primary structure comprises 217 residues: Membrane-associated progesterone receptor component 2 (217 aa).

S15 carries O-linked (Xyl...) (chondroitin sulfate) serine glycosylation. The chain crosses the membrane as a helical span at residues 40-62; sequence ALLATGGEMLLNVALVALVLLGA. 3 positions are modified to phosphoserine: S84, S98, and S202. Residues 96-195 enclose the Cytochrome b5 heme-binding domain; the sequence is DFSLEQLRQY…EKYDYVGRLL (100 aa). The segment at 196–217 is disordered; the sequence is KPGEEPSEYTDEEDTKDHSKQD. Acidic residues predominate over residues 200-209; the sequence is EPSEYTDEED. The residue at position 204 (Y204) is a Phosphotyrosine. Position 205 is a phosphothreonine (T205).

It belongs to the cytochrome b5 family. MAPR subfamily. In terms of assembly, interacts with PGRMC1. Interacts with AAAS. Expressed in brown adipose tissue, white adipose tissue, liver, heart, skeletal muscle, brain and adrenal gland.

The protein resides in the membrane. Its subcellular location is the nucleus envelope. It localises to the endoplasmic reticulum. The protein localises to the secreted. In terms of biological role, required for the maintenance of uterine histoarchitecture and normal female reproductive lifespan. May serve as a universal non-classical progesterone receptor in the uterus. Intracellular heme chaperone required for delivery of labile, or signaling heme, to the nucleus. Plays a role in adipocyte function and systemic glucose homeostasis. In brown fat, which has a high demand for heme, delivery of labile heme in the nucleus regulates the activity of heme-responsive transcriptional repressors such as NR1D1 and BACH1. In Mus musculus (Mouse), this protein is Membrane-associated progesterone receptor component 2.